The primary structure comprises 301 residues: MEKDFQDIQQLDSEENDHQLIGDEEQGSHVQNLRTENPRWGGQPPSRPFPQRLCSKFRLSLLALAFNILLLVVICVVSSQSMQLQKEFWTLKETLSNFSTTTLMEFKALDSHGGSRNDNLTSWETILEKKQKDIKADHSTLLFHLKHFPLDLRTLTCQLAFFLSNGTECCPVNWVEFGGSCYWFSRDGLTWAEADQYCQMENAHLLVINSREEQEFVVKHRGAFHIWIGLTDKDGSWKWVDGTEYRSNFKNWAFTQPDNWQGHEEGGSEDCAEILSDGLWNDNFCQQVNRWACERKRDITY.

The disordered stretch occupies residues 1 to 29 (MEKDFQDIQQLDSEENDHQLIGDEEQGSH). The Cytoplasmic portion of the chain corresponds to 1–58 (MEKDFQDIQQLDSEENDHQLIGDEEQGSHVQNLRTENPRWGGQPPSRPFPQRLCSKFR). Ser-13 carries the phosphoserine modification. Cys-54 is lipidated: S-palmitoyl cysteine. A helical; Signal-anchor for type II membrane protein membrane pass occupies residues 59-79 (LSLLALAFNILLLVVICVVSS). Over 80 to 301 (QSMQLQKEFW…ACERKRDITY (222 aa)) the chain is Extracellular. Asn-97, Asn-119, and Asn-165 each carry an N-linked (GlcNAc...) asparagine glycan. In terms of domain architecture, C-type lectin spans 169–295 (CCPVNWVEFG…QQVNRWACER (127 aa)). Cystine bridges form between Cys-170–Cys-181, Cys-198–Cys-293, and Cys-271–Cys-285.

As to quaternary structure, interacts with LASS2. Expressed exclusively in hepatic parenchymal cells.

The protein localises to the membrane. Its function is as follows. Mediates the endocytosis of plasma glycoproteins to which the terminal sialic acid residue on their complex carbohydrate moieties has been removed. The receptor recognizes terminal galactose and N-acetylgalactosamine units. After ligand binding to the receptor, the resulting complex is internalized and transported to a sorting organelle, where receptor and ligand are disassociated. The receptor then returns to the cell membrane surface. This is Asialoglycoprotein receptor 2 (Asgr2) from Rattus norvegicus (Rat).